Here is a 165-residue protein sequence, read N- to C-terminus: Phosphopantetheine adenylyltransferase (165 aa).

Serine 10 contributes to the substrate binding site. ATP contacts are provided by residues 10–11 (SF) and histidine 18. The substrate site is built by lysine 42, leucine 74, and arginine 88. ATP contacts are provided by residues 89 to 91 (GLR), glutamate 99, and 124 to 130 (YSFLSSS).

Belongs to the bacterial CoaD family. In terms of assembly, homohexamer. It depends on Mg(2+) as a cofactor.

It is found in the cytoplasm. It carries out the reaction (R)-4'-phosphopantetheine + ATP + H(+) = 3'-dephospho-CoA + diphosphate. It participates in cofactor biosynthesis; coenzyme A biosynthesis; CoA from (R)-pantothenate: step 4/5. Its function is as follows. Reversibly transfers an adenylyl group from ATP to 4'-phosphopantetheine, yielding dephospho-CoA (dPCoA) and pyrophosphate. This is Phosphopantetheine adenylyltransferase from Anoxybacillus flavithermus (strain DSM 21510 / WK1).